The chain runs to 197 residues: ATP-dependent Clp protease proteolytic subunit (197 aa).

S98 serves as the catalytic Nucleophile. Residue H123 is part of the active site.

This sequence belongs to the peptidase S14 family. As to quaternary structure, fourteen ClpP subunits assemble into 2 heptameric rings which stack back to back to give a disk-like structure with a central cavity, resembling the structure of eukaryotic proteasomes.

Its subcellular location is the cytoplasm. It catalyses the reaction Hydrolysis of proteins to small peptides in the presence of ATP and magnesium. alpha-casein is the usual test substrate. In the absence of ATP, only oligopeptides shorter than five residues are hydrolyzed (such as succinyl-Leu-Tyr-|-NHMec, and Leu-Tyr-Leu-|-Tyr-Trp, in which cleavage of the -Tyr-|-Leu- and -Tyr-|-Trp bonds also occurs).. Its function is as follows. Cleaves peptides in various proteins in a process that requires ATP hydrolysis. Has a chymotrypsin-like activity. Plays a major role in the degradation of misfolded proteins. This is ATP-dependent Clp protease proteolytic subunit from Lysinibacillus sphaericus (strain C3-41).